The chain runs to 306 residues: Tyrosine recombinase XerC (306 aa).

The Core-binding (CB) domain occupies 1–85 (MQQQLEQFLA…AIKSFFEYLQ (85 aa)). A Tyr recombinase domain is found at 106–289 (FLPKAITVAQ…SNDRAVKYDQ (184 aa)). Catalysis depends on residues Arg-147, Lys-171, His-241, Arg-244, and His-267. The O-(3'-phospho-DNA)-tyrosine intermediate role is filled by Tyr-276.

It belongs to the 'phage' integrase family. XerC subfamily. As to quaternary structure, forms a cyclic heterotetrameric complex composed of two molecules of XerC and two molecules of XerD.

The protein resides in the cytoplasm. Its function is as follows. Site-specific tyrosine recombinase, which acts by catalyzing the cutting and rejoining of the recombining DNA molecules. The XerC-XerD complex is essential to convert dimers of the bacterial chromosome into monomers to permit their segregation at cell division. It also contributes to the segregational stability of plasmids. This is Tyrosine recombinase XerC from Herpetosiphon aurantiacus (strain ATCC 23779 / DSM 785 / 114-95).